Reading from the N-terminus, the 474-residue chain is MPSMKRRKLSHTPPQGEAEDGFSDSETSQASLQETPGNDEKIEATTTKSFKDLGIIDSLCEACDSLGYKAPTQIQAESIPLALQGRDLIGLAETGSGKTAAFALPILQALMDKPQSMFGLVLAPTRELAYQISQQFEALGSLISVRCAVIVGGMDMVSQAIALGKKPHIIVATPGRLLDHLENTKGFSLRSLKYLVMDEADRLLDLDFGPILDKILKVLPKERRTYLFSATMSSKVESLQRASLSNPLRVSVSSNKYQTVSTLLQNCLIIPHKHKDIYLIYLLNEFPGQSVIIFTRTVNETQRLAILLRALGFGAIPLHGQLSQSARLGALGKFRSRSRNILVATDVAARGLDIPSVDLVLNYDLPSDSKTYIHRVGRTARAGKSGRAFSLVTQYDVEIWQRIEAALGKELDEYKVEKEEVMVLSDRVGEAQRHAITEMKELHENRGKKGATLRNRRIGKGAKRSRDEMDREEG.

Basic residues predominate over residues 1–10 (MPSMKRRKLS). The segment at 1–43 (MPSMKRRKLSHTPPQGEAEDGFSDSETSQASLQETPGNDEKIE) is disordered. Residues 24-36 (DSETSQASLQETP) are compositionally biased toward polar residues. A Q motif motif is present at residues 48 to 76 (KSFKDLGIIDSLCEACDSLGYKAPTQIQA). A Helicase ATP-binding domain is found at 79–250 (IPLALQGRDL…RASLSNPLRV (172 aa)). An ATP-binding site is contributed by 92 to 99 (AETGSGKT). Positions 198-201 (DEAD) match the DEAD box motif. Residues 278 to 422 (YLIYLLNEFP…EYKVEKEEVM (145 aa)) form the Helicase C-terminal domain. The disordered stretch occupies residues 442 to 474 (LHENRGKKGATLRNRRIGKGAKRSRDEMDREEG). Basic residues predominate over residues 448–463 (KKGATLRNRRIGKGAK). Residues 464–474 (RSRDEMDREEG) are compositionally biased toward basic and acidic residues.

Belongs to the DEAD box helicase family. DDX47/RRP3 subfamily. In terms of assembly, interacts with the SSU processome.

The protein localises to the nucleus. It carries out the reaction ATP + H2O = ADP + phosphate + H(+). Functionally, ATP-dependent rRNA helicase required for pre-ribosomal RNA processing. Involved in the maturation of the 35S-pre-rRNA and to its cleavage to mature 18S rRNA. The chain is ATP-dependent rRNA helicase RRP3 from Coccidioides immitis (strain RS) (Valley fever fungus).